We begin with the raw amino-acid sequence, 249 residues long: 2,3-bisphosphoglycerate-dependent phosphoglycerate mutase (249 aa).

Residues 8 to 15 (RHGESIWN), 21 to 22 (TG), arginine 60, 87 to 90 (ERHY), lysine 98, 114 to 115 (RR), and 183 to 184 (GN) contribute to the substrate site. Catalysis depends on histidine 9, which acts as the Tele-phosphohistidine intermediate. The active-site Proton donor/acceptor is glutamate 87.

It belongs to the phosphoglycerate mutase family. BPG-dependent PGAM subfamily.

It catalyses the reaction (2R)-2-phosphoglycerate = (2R)-3-phosphoglycerate. It functions in the pathway carbohydrate degradation; glycolysis; pyruvate from D-glyceraldehyde 3-phosphate: step 3/5. Catalyzes the interconversion of 2-phosphoglycerate and 3-phosphoglycerate. In Caldanaerobacter subterraneus subsp. tengcongensis (strain DSM 15242 / JCM 11007 / NBRC 100824 / MB4) (Thermoanaerobacter tengcongensis), this protein is 2,3-bisphosphoglycerate-dependent phosphoglycerate mutase.